A 327-amino-acid polypeptide reads, in one-letter code: Phenylalanine--tRNA ligase alpha subunit (327 aa).

Glu252 serves as a coordination point for Mg(2+).

The protein belongs to the class-II aminoacyl-tRNA synthetase family. Phe-tRNA synthetase alpha subunit type 1 subfamily. Tetramer of two alpha and two beta subunits. The cofactor is Mg(2+).

The protein resides in the cytoplasm. It catalyses the reaction tRNA(Phe) + L-phenylalanine + ATP = L-phenylalanyl-tRNA(Phe) + AMP + diphosphate + H(+). In Vibrio parahaemolyticus serotype O3:K6 (strain RIMD 2210633), this protein is Phenylalanine--tRNA ligase alpha subunit.